The sequence spans 232 residues: Homeobox protein Rhox13 (232 aa).

The segment at 45–114 (QAAVASSHDS…EAAAPSVAAV (70 aa)) is disordered. The segment covering 68–105 (SDSESESDSESESDSSDSSDESDDDSSTSDEDTSDPEE) has biased composition (acidic residues). Residues 148-207 (RRGPPFHFAQWQVEEMESLFEETQYPDLLTRGELARTLNVPEVKVKVWFTNRRAKQRKIE) constitute a DNA-binding region (homeobox).

Belongs to the paired-like homeobox family.

It is found in the nucleus. Functionally, probable transcription factor. The protein is Homeobox protein Rhox13 of Mus musculus (Mouse).